Reading from the N-terminus, the 723-residue chain is Tripartite motif-containing protein 42 (723 aa).

The RING-type zinc finger occupies 146 to 192 (CPMCNRLRLHSFMLPCNHSLCEKCLRQLQKHAEVTENFFILICPMCS). 2 consecutive B box-type zinc fingers follow at residues 235–280 (PILC…FVDT) and 285–326 (QDEK…TVSL). 4 residues coordinate Zn(2+): Cys290, His293, Cys313, and His318. Residues 382-412 (KLRAILQEKEKIIMEQIENLEVSRQKEIEKY) adopt a coiled-coil conformation. The region spanning 434–492 (LKETGQVAFLQSAKILVDQIEEGIQNTFRPDPQLRLHSLHCIPLDFAELSNAIHELFPT) is the COS domain. The region spanning 603–701 (TPGPIVIYQT…DICKVVTPDG (99 aa)) is the Fibronectin type-III domain.

Belongs to the TRIM/RBCC family.

The polypeptide is Tripartite motif-containing protein 42 (Trim42) (Mus musculus (Mouse)).